Reading from the N-terminus, the 434-residue chain is UDP-N-acetylmuramate--L-alanine ligase (434 aa).

110–116 (GAHGKTS) contacts ATP.

Belongs to the MurCDEF family.

Its subcellular location is the cytoplasm. It carries out the reaction UDP-N-acetyl-alpha-D-muramate + L-alanine + ATP = UDP-N-acetyl-alpha-D-muramoyl-L-alanine + ADP + phosphate + H(+). The protein operates within cell wall biogenesis; peptidoglycan biosynthesis. Cell wall formation. This chain is UDP-N-acetylmuramate--L-alanine ligase, found in Limosilactobacillus reuteri (strain DSM 20016) (Lactobacillus reuteri).